The sequence spans 458 residues: UPF0210 protein MJ1665 (458 aa).

It belongs to the UPF0210 family.

The protein is UPF0210 protein MJ1665 of Methanocaldococcus jannaschii (strain ATCC 43067 / DSM 2661 / JAL-1 / JCM 10045 / NBRC 100440) (Methanococcus jannaschii).